Consider the following 515-residue polypeptide: Cytochrome P450 1A2 (515 aa).

Serine 69 carries O-linked (GlcNAc) serine glycosylation. A substrate-binding site is contributed by phenylalanine 226. Cysteine 458 contributes to the heme binding site.

This sequence belongs to the cytochrome P450 family. In terms of assembly, interacts with PGRMC1; the interaction requires PGRMC1 homodimerization. It depends on heme as a cofactor.

It localises to the endoplasmic reticulum membrane. The protein localises to the microsome membrane. It catalyses the reaction an organic molecule + reduced [NADPH--hemoprotein reductase] + O2 = an alcohol + oxidized [NADPH--hemoprotein reductase] + H2O + H(+). The catalysed reaction is 17beta-estradiol + reduced [NADPH--hemoprotein reductase] + O2 = 2-hydroxy-17beta-estradiol + oxidized [NADPH--hemoprotein reductase] + H2O + H(+). The enzyme catalyses 17beta-estradiol + reduced [NADPH--hemoprotein reductase] + O2 = 4-hydroxy-17beta-estradiol + oxidized [NADPH--hemoprotein reductase] + H2O + H(+). It carries out the reaction estrone + reduced [NADPH--hemoprotein reductase] + O2 = 2-hydroxyestrone + oxidized [NADPH--hemoprotein reductase] + H2O + H(+). It catalyses the reaction estrone + reduced [NADPH--hemoprotein reductase] + O2 = 4-hydroxyestrone + oxidized [NADPH--hemoprotein reductase] + H2O + H(+). The catalysed reaction is cholesterol + reduced [NADPH--hemoprotein reductase] + O2 = 25-hydroxycholesterol + oxidized [NADPH--hemoprotein reductase] + H2O + H(+). The enzyme catalyses all-trans-retinol + reduced [NADPH--hemoprotein reductase] + O2 = all-trans-retinal + oxidized [NADPH--hemoprotein reductase] + 2 H2O + H(+). It carries out the reaction all-trans-retinal + reduced [NADPH--hemoprotein reductase] + O2 = all-trans-retinoate + oxidized [NADPH--hemoprotein reductase] + H2O + 2 H(+). It catalyses the reaction (5Z,8Z,11Z,14Z)-eicosatetraenoate + reduced [NADPH--hemoprotein reductase] + O2 = (14R,15S)-epoxy-(5Z,8Z,11Z)-eicosatrienoate + oxidized [NADPH--hemoprotein reductase] + H2O + H(+). The catalysed reaction is (5Z,8Z,11Z,14Z)-eicosatetraenoate + reduced [NADPH--hemoprotein reductase] + O2 = (14S,15R)-epoxy-(5Z,8Z,11Z)-eicosatrienoate + oxidized [NADPH--hemoprotein reductase] + H2O + H(+). The enzyme catalyses (5Z,8Z,11Z,14Z,17Z)-eicosapentaenoate + reduced [NADPH--hemoprotein reductase] + O2 = (17R,18S)-epoxy-(5Z,8Z,11Z,14Z)-eicosatetraenoate + oxidized [NADPH--hemoprotein reductase] + H2O + H(+). It carries out the reaction (4Z,7Z,10Z,13Z,16Z,19Z)-docosahexaenoate + reduced [NADPH--hemoprotein reductase] + O2 = (19R,20S)-epoxy-(4Z,7Z,10Z,13Z,16Z)-docosapentaenoate + oxidized [NADPH--hemoprotein reductase] + H2O + H(+). It catalyses the reaction (5S)-hydroperoxy-(6E,8Z,11Z,14Z)-eicosatetraenoate = 5-oxo-(6E,8Z,11Z,14Z)-eicosatetraenoate + H2O. The catalysed reaction is (12S)-hydroperoxy-(5Z,8Z,10E,14Z)-eicosatetraenoate = 12-oxo-(5Z,8Z,10E,14Z)-eicosatetraenoate + H2O. The enzyme catalyses (15S)-hydroperoxy-(5Z,8Z,11Z,13E)-eicosatetraenoate = 15-oxo-(5Z,8Z,11Z,13E)-eicosatetraenoate + H2O. It carries out the reaction (13S)-hydroperoxy-(9Z,11E)-octadecadienoate = 13-oxo-(9Z,11E)-octadecadienoate + H2O. It catalyses the reaction (5Z,8Z,11Z,14Z)-eicosatetraenoate + reduced [NADPH--hemoprotein reductase] + O2 = 13-hydroxy-(5Z,8Z,11Z,14Z)-eicosatetraenoate + oxidized [NADPH--hemoprotein reductase] + H2O + H(+). The catalysed reaction is (5Z,8Z,11Z,14Z)-eicosatetraenoate + reduced [NADPH--hemoprotein reductase] + O2 = 19-hydroxy-(5Z,8Z,11Z,14Z)-eicosatetraenoate + oxidized [NADPH--hemoprotein reductase] + H2O + H(+). The enzyme catalyses (9Z,12Z)-octadecadienoate + reduced [NADPH--hemoprotein reductase] + O2 = 11-hydroxy-(9Z,12Z)-octadecadienoate + oxidized [NADPH--hemoprotein reductase] + H2O + H(+). The protein operates within cofactor metabolism; retinol metabolism. Its pathway is steroid metabolism; cholesterol metabolism. It participates in lipid metabolism; arachidonate metabolism. Its function is as follows. A cytochrome P450 monooxygenase involved in the metabolism of various endogenous substrates, including fatty acids, steroid hormones and vitamins. Mechanistically, uses molecular oxygen inserting one oxygen atom into a substrate, and reducing the second into a water molecule, with two electrons provided by NADPH via cytochrome P450 reductase (NADPH--hemoprotein reductase). Catalyzes the hydroxylation of carbon-hydrogen bonds. Exhibits high catalytic activity for the formation of hydroxyestrogens from estrone (E1) and 17beta-estradiol (E2), namely 2-hydroxy E1 and E2. Metabolizes cholesterol toward 25-hydroxycholesterol, a physiological regulator of cellular cholesterol homeostasis. May act as a major enzyme for all-trans retinoic acid biosynthesis in the liver. Catalyzes two successive oxidative transformation of all-trans retinol to all-trans retinal and then to the active form all-trans retinoic acid. Primarily catalyzes stereoselective epoxidation of the last double bond of polyunsaturated fatty acids (PUFA), displaying a strong preference for the (R,S) stereoisomer. Catalyzes bisallylic hydroxylation and omega-1 hydroxylation of PUFA. May also participate in eicosanoids metabolism by converting hydroperoxide species into oxo metabolites (lipoxygenase-like reaction, NADPH-independent). Plays a role in the oxidative metabolism of xenobiotics. Catalyzes the N-hydroxylation of heterocyclic amines and the O-deethylation of phenacetin. Metabolizes caffeine via N3-demethylation. This Cavia porcellus (Guinea pig) protein is Cytochrome P450 1A2 (CYP1A2).